The primary structure comprises 553 residues: MANPEVLVSSCRARQDESPCTFHPSSSPSEQLLLEDQMRRKLKFFFMNPCEKFWARGRKPWKLAIQILKIAMVTIQLVLFGLSNQMVVAFKEENTIAFKHLFLKGYMDRMDDTYAVYTQSEVYDQIIFAVTQYLQLQNISVGNHAYENKGTKQSAMAICQHFYRQGTICPGNDTFDIDPEVETECFLVEPDEASHLGTPGENKLNLSLDFHRLLTVELQFKLKAINLQTVRHQELPDCYDFTLTITFDNKAHSGRIKISLDNDISIKECKDWHVSGSIQKNTHYMMIFDAFVILTCLASLVLCARSVIRGLQLQQEFVNFFLLHYKKEVSASDQMEFINGWYIMIIISDILTIVGSVLKMEIQAKSLTSYDVCSILLGTSTMLVWLGVIRYLGFFAKYNLLILTLQAALPNVMRFCCCAAMIYLGYCFCGWIVLGPYHEKFRSLNRVSECLFSLINGDDMFSTFAKMQQKSYLVWLFSRVYLYSFISLFIYMILSLFIALITDTYETIKHYQQDGFPETELRKFIAECKDLPNSGKYRLEDDPPGSLLCCCKK.

Topologically, residues 1–62 (MANPEVLVSS…FWARGRKPWK (62 aa)) are cytoplasmic. An interaction with phosphoinositides region spans residues 52–62 (KFWARGRKPWK). Residues 63–83 (LAIQILKIAMVTIQLVLFGLS) form a helical membrane-spanning segment. The Extracellular segment spans residues 84-283 (NQMVVAFKEE…VSGSIQKNTH (200 aa)). An extracellular/lumenal pore loop region spans residues 104–118 (KGYMDRMDDTYAVYT). Asn138 is a glycosylation site (N-linked (GlcNAc...) asparagine). A disulfide bond links Cys159 and Cys185. Asn205 carries an N-linked (GlcNAc...) asparagine glycan. A disulfide bridge links Cys238 with Cys269. The chain crosses the membrane as a helical span at residues 284 to 304 (YMMIFDAFVILTCLASLVLCA). Topologically, residues 305-341 (RSVIRGLQLQQEFVNFFLLHYKKEVSASDQMEFINGW) are cytoplasmic. Residues 342 to 362 (YIMIIISDILTIVGSVLKMEI) form a helical membrane-spanning segment. The Extracellular portion of the chain corresponds to 363–371 (QAKSLTSYD). Residues 372–392 (VCSILLGTSTMLVWLGVIRYL) traverse the membrane as a helical segment. Residues 393-414 (GFFAKYNLLILTLQAALPNVMR) lie on the Cytoplasmic side of the membrane. Residues 415-435 (FCCCAAMIYLGYCFCGWIVLG) form a helical membrane-spanning segment. The Extracellular portion of the chain corresponds to 436-443 (PYHEKFRS). Positions 444–464 (LNRVSECLFSLINGDDMFSTF) form an intramembrane region, pore-forming. The Selectivity filter signature appears at 456-459 (NGDD). The Extracellular segment spans residues 465 to 475 (AKMQQKSYLVW). The chain crosses the membrane as a helical span at residues 476–497 (LFSRVYLYSFISLFIYMILSLF). The Cytoplasmic segment spans residues 498–553 (IALITDTYETIKHYQQDGFPETELRKFIAECKDLPNSGKYRLEDDPPGSLLCCCKK).

It belongs to the transient receptor (TC 1.A.4) family. Polycystin subfamily. MCOLN3 sub-subfamily. As to quaternary structure, homotetramer. Can heterooligomerize with MCOLN1; heteromeric assemblies have different channel properties as compared to the respective homooligomers and may be tissue-specific. May heterooligomerize with TRPV5 to form a functional distinct ion channel. Interacts with GABARAPL2. N-glycosylated. As to expression, expressed in the cochlea; particularly in the inner and outer hair cells (at protein level).

It localises to the early endosome membrane. Its subcellular location is the late endosome membrane. It is found in the cytoplasmic vesicle. The protein localises to the autophagosome membrane. The protein resides in the cell projection. It localises to the stereocilium membrane. The catalysed reaction is Ca(2+)(in) = Ca(2+)(out). It catalyses the reaction Mg(2+)(in) = Mg(2+)(out). It carries out the reaction K(+)(in) = K(+)(out). The enzyme catalyses Na(+)(in) = Na(+)(out). With respect to regulation, channel activity is activated by PtdIns(3,5)P2 (phosphatidylinositol 3,5-bisphosphate). Inhibited by lumenal H(+) and Na(+). The channel pore shows dynamic behavior and undergoes spontaneous, Ca(2+)-dependent modulation when conducting Ca(2+). In terms of biological role, nonselective cation channel probably playing a role in the regulation of membrane trafficking events. Acts as a Ca(2+)-permeable cation channel with inwardly rectifying activity. Mediates release of Ca(2+) from endosomes to the cytoplasm, contributes to endosomal acidification and is involved in the regulation of membrane trafficking and fusion in the endosomal pathway. Also permeable to Mg(2+), Na(+) and K(+). Does not seem to act as mechanosensory transduction channel in inner ear sensory hair cells. Proposed to play a critical role at the cochlear stereocilia ankle-link region during hair-bundle growth. Involved in the regulation of autophagy. Through association with GABARAPL2 may be involved in autophagosome formation possibly providing Ca(2+) for the fusion process. Through a possible and probably tissue-specific heteromerization with MCOLN1 may be at least in part involved in many lysosome-dependent cellular events. Possible heteromeric ion channel assemblies with TRPV5 show pharmacological similarity with TRPML3. The chain is Mucolipin-3 (Mcoln3) from Mus musculus (Mouse).